The chain runs to 856 residues: Rab effector MyRIP (856 aa).

The region spanning 4 to 124 is the RabBD domain; the sequence is KLDLSGLTDD…TQSLEWFYNN (121 aa). The FYVE-type zinc finger occupies 63 to 105; sequence CCMRCCSPFTFLVNARRRCGECKFSVCKSCCSYQKHEKLWVCC. Positions 143–560 are myosin-binding; sequence KKHRLESGAC…AQVSDNVSET (418 aa). The PKA-binding stretch occupies residues 193-209; that stretch reads VALQVAEEAIEEAISKA. Residues 232-248 are negative regulation of PKA-binding; sequence LAEELAGTILQRIIRKQ. The tract at residues 251 to 287 is disordered; the sequence is KADLHAEEEEPECTRPQSSGVKARGEGTAAPPGRHKA. Residue Ser-299 is modified to Phosphoserine. Polar residues predominate over residues 302 to 311; that stretch reads TEDTLKTSSA. Disordered stretches follow at residues 302–323, 350–376, 392–578, 592–625, 778–805, and 826–845; these read TEDTLKTSSAEAAPRQPKDRAQ, QSPDGNWMTLKDSSRQPPTRLLAKPKS, YDEL…SAEE, SEKETSSGEDQESESKTEPKNQKGSLSSEENNQG, RRDQKQRSQVQTIDTSRQQRRKLPAPPV, and LLQGSSTNRPTASTSNTKDL. Ser-351 carries the phosphoserine modification. Over residues 395–405 the composition is skewed to acidic residues; it reads LGSDSEEDFDY. Low complexity-rich tracts occupy residues 427-437 and 450-460; these read PAQAQSSGQGP and SDSETSSTSSS. The segment at 495–856 is actin-binding; the sequence is FNPQAAGGET…EPVLESAVMY (362 aa). Composition is skewed to polar residues over residues 551–574, 613–625, 784–793, and 826–843; these read AQVSDNVSETDISNEAQNSRSSTD, QKGSLSSEENNQG, RSQVQTIDTS, and LLQGSSTNRPTASTSNTK.

Binds MYO5A, MYO7A and F-actin. Binds RAB27A that has been activated by GTP-binding via its N-terminus. Interacts with PRKAR2A. Interacts with components of the exocyst complex, including EXOC3 and EXOC4.

The protein localises to the cytoplasm. It localises to the perinuclear region. The protein resides in the cytoplasmic vesicle. It is found in the secretory vesicle. Its subcellular location is the melanosome. Rab effector protein involved in melanosome transport. Serves as link between melanosome-bound RAB27A and the motor proteins MYO5A and MYO7A. May link RAB27A-containing vesicles to actin filaments. Functions as a protein kinase A-anchoring protein (AKAP). May act as a scaffolding protein that links PKA to components of the exocytosis machinery, thus facilitating exocytosis, including insulin release. This chain is Rab effector MyRIP (Myrip), found in Rattus norvegicus (Rat).